A 612-amino-acid chain; its full sequence is Sulfite reductase [NADPH] hemoprotein beta-component (612 aa).

A disordered region spans residues Met-1–Arg-32. Residues Cys-469, Cys-475, Cys-514, and Cys-518 each contribute to the [4Fe-4S] cluster site. Cys-518 is a binding site for siroheme.

The protein belongs to the nitrite and sulfite reductase 4Fe-4S domain family. In terms of assembly, alpha(8)-beta(8). The alpha component is a flavoprotein, the beta component is a hemoprotein. The cofactor is siroheme. [4Fe-4S] cluster is required as a cofactor.

It carries out the reaction hydrogen sulfide + 3 NADP(+) + 3 H2O = sulfite + 3 NADPH + 4 H(+). It functions in the pathway sulfur metabolism; hydrogen sulfide biosynthesis; hydrogen sulfide from sulfite (NADPH route): step 1/1. Functionally, component of the sulfite reductase complex that catalyzes the 6-electron reduction of sulfite to sulfide. This is one of several activities required for the biosynthesis of L-cysteine from sulfate. This is Sulfite reductase [NADPH] hemoprotein beta-component from Methylorubrum populi (strain ATCC BAA-705 / NCIMB 13946 / BJ001) (Methylobacterium populi).